The sequence spans 182 residues: ATP synthase subunit delta, organellar chromatophore (182 aa).

The protein belongs to the ATPase delta chain family. F-type ATPases have 2 components, F(1) - the catalytic core - and F(0) - the membrane proton channel. F(1) has five subunits: alpha(3), beta(3), gamma(1), delta(1), epsilon(1). CF(0) has four main subunits: a(1), b(1), b'(1) and c(10-14). The alpha and beta chains form an alternating ring which encloses part of the gamma chain. F(1) is attached to F(0) by a central stalk formed by the gamma and epsilon chains, while a peripheral stalk is formed by the delta, b and b' chains.

The protein resides in the plastid. It localises to the organellar chromatophore thylakoid membrane. In terms of biological role, f(1)F(0) ATP synthase produces ATP from ADP in the presence of a proton or sodium gradient. F-type ATPases consist of two structural domains, F(1) containing the extramembraneous catalytic core and F(0) containing the membrane proton channel, linked together by a central stalk and a peripheral stalk. During catalysis, ATP synthesis in the catalytic domain of F(1) is coupled via a rotary mechanism of the central stalk subunits to proton translocation. Functionally, this protein is part of the stalk that links CF(0) to CF(1). It either transmits conformational changes from CF(0) to CF(1) or is implicated in proton conduction. The sequence is that of ATP synthase subunit delta, organellar chromatophore from Paulinella chromatophora.